The following is a 284-amino-acid chain: L-ribulose-5-phosphate 3-epimerase UlaE (284 aa).

The protein belongs to the L-ribulose-5-phosphate 3-epimerase family.

The enzyme catalyses L-ribulose 5-phosphate = L-xylulose 5-phosphate. It functions in the pathway cofactor degradation; L-ascorbate degradation; D-xylulose 5-phosphate from L-ascorbate: step 3/4. Its function is as follows. Catalyzes the isomerization of L-xylulose-5-phosphate to L-ribulose-5-phosphate. Is involved in the anaerobic L-ascorbate utilization. In Escherichia coli (strain SMS-3-5 / SECEC), this protein is L-ribulose-5-phosphate 3-epimerase UlaE.